The primary structure comprises 453 residues: Kynureninase (453 aa).

Residues L111, T112, 139–142 (FPSD), S196, D226, H229, and Y251 contribute to the pyridoxal 5'-phosphate site. K252 is subject to N6-(pyridoxal phosphate)lysine. W286 and N314 together coordinate pyridoxal 5'-phosphate.

Belongs to the kynureninase family. As to quaternary structure, homodimer. The cofactor is pyridoxal 5'-phosphate.

Its subcellular location is the cytoplasm. The protein localises to the nucleus. It catalyses the reaction L-kynurenine + H2O = anthranilate + L-alanine + H(+). The catalysed reaction is 3-hydroxy-L-kynurenine + H2O = 3-hydroxyanthranilate + L-alanine + H(+). The protein operates within amino-acid degradation; L-kynurenine degradation; L-alanine and anthranilate from L-kynurenine: step 1/1. Its pathway is cofactor biosynthesis; NAD(+) biosynthesis; quinolinate from L-kynurenine: step 2/3. Functionally, catalyzes the cleavage of L-kynurenine (L-Kyn) and L-3-hydroxykynurenine (L-3OHKyn) into anthranilic acid (AA) and 3-hydroxyanthranilic acid (3-OHAA), respectively. This chain is Kynureninase, found in Saccharomyces cerevisiae (strain ATCC 204508 / S288c) (Baker's yeast).